A 465-amino-acid chain; its full sequence is Cyclin-A1 (465 aa).

Belongs to the cyclin family. Cyclin AB subfamily. In terms of assembly, interacts with the CDK2 and the CDC2 protein kinases to form a serine/threonine kinase holoenzyme complex. The cyclin subunit imparts substrate specificity to the complex. Does not bind CDK4 and CDK5 (in vitro). The cyclin A1-CDK2 complex interacts with transcription factor E2F-1 and RB proteins. Found in a complex with CDK2, CABLES1 and CCNE1. Interacts with INCA1. Interacts with KLHDC9. Post-translationally, polyubiquitinated via 'Lys-11'-linked ubiquitin by the anaphase-promoting complex (APC/C), leading to its degradation by the proteasome. Deubiquitinated and stabilized by USP37 enables entry into S phase. Ubiquitinated during the G1 phase by the SCF(FBXO31) complex, leading to its proteasomal degradation. In terms of tissue distribution, very high levels in testis and very low levels in brain. Also found in myeloid leukemia cell lines.

It localises to the nucleus. Functionally, may be involved in the control of the cell cycle at the G1/S (start) and G2/M (mitosis) transitions. May primarily function in the control of the germline meiotic cell cycle and additionally in the control of mitotic cell cycle in some somatic cells. In Homo sapiens (Human), this protein is Cyclin-A1 (CCNA1).